The sequence spans 477 residues: Glycogen synthase (477 aa).

ADP-alpha-D-glucose is bound at residue Lys15.

The protein belongs to the glycosyltransferase 1 family. Bacterial/plant glycogen synthase subfamily.

The catalysed reaction is [(1-&gt;4)-alpha-D-glucosyl](n) + ADP-alpha-D-glucose = [(1-&gt;4)-alpha-D-glucosyl](n+1) + ADP + H(+). It functions in the pathway glycan biosynthesis; glycogen biosynthesis. Synthesizes alpha-1,4-glucan chains using ADP-glucose. The chain is Glycogen synthase from Streptococcus pneumoniae serotype 4 (strain ATCC BAA-334 / TIGR4).